The primary structure comprises 104 residues: V-type ATP synthase subunit F (104 aa).

The protein belongs to the V-ATPase F subunit family.

Functionally, produces ATP from ADP in the presence of a proton gradient across the membrane. In Thermus thermophilus (strain ATCC BAA-163 / DSM 7039 / HB27), this protein is V-type ATP synthase subunit F.